Here is a 267-residue protein sequence, read N- to C-terminus: 3-methyl-2-oxobutanoate hydroxymethyltransferase (267 aa).

Positions 45 and 84 each coordinate Mg(2+). 3-methyl-2-oxobutanoate contacts are provided by residues 45–46 (DS), Asp84, and Lys113. Glu115 serves as a coordination point for Mg(2+). Glu182 acts as the Proton acceptor in catalysis.

The protein belongs to the PanB family. In terms of assembly, homodecamer; pentamer of dimers. The cofactor is Mg(2+).

The protein localises to the cytoplasm. It carries out the reaction 3-methyl-2-oxobutanoate + (6R)-5,10-methylene-5,6,7,8-tetrahydrofolate + H2O = 2-dehydropantoate + (6S)-5,6,7,8-tetrahydrofolate. Its pathway is cofactor biosynthesis; coenzyme A biosynthesis. Catalyzes the reversible reaction in which hydroxymethyl group from 5,10-methylenetetrahydrofolate is transferred onto alpha-ketoisovalerate to form ketopantoate. This chain is 3-methyl-2-oxobutanoate hydroxymethyltransferase, found in Saccharolobus islandicus (strain Y.N.15.51 / Yellowstone #2) (Sulfolobus islandicus).